Consider the following 108-residue polypeptide: Nitrite reductase (NADH) small subunit (108 aa).

The protein to B.subtilis NasE. In terms of assembly, associates with NirB.

It localises to the cytoplasm. The catalysed reaction is NH4(+) + 3 NAD(+) + 2 H2O = nitrite + 3 NADH + 5 H(+). Required for activity of the reductase. In Escherichia coli O157:H7, this protein is Nitrite reductase (NADH) small subunit (nirD).